The sequence spans 195 residues: COMM domain-containing protein 3 (195 aa).

The COMM domain occupies 124–193 (HITDVSWRLE…DASKSLERAT (70 aa)).

The protein belongs to the COMM domain-containing protein 3 family. In terms of assembly, component of the commander complex consisting of the CCC subcomplex and the retriever subcomplex. Component of the CCC (COMMD/CCDC22/CCDC93) subcomplex consisting of COMMD1, COMMD2, COMMD3, COMMD4, COMMD5, COMMD6, COMMD7, COMMD8, COMMD9, COMMD10, CCDC22 and CCDC93; within the complex forms a heterodimer with COMMD2. Interacts with NFKB1/p105. Interacts with CCDC22, CCDC93, SCNN1B, CUL3, CUL4A, CUL4B, CUL5. In terms of tissue distribution, widely expressed with highest expression in thymus.

The protein localises to the cytoplasm. It localises to the nucleus. Functionally, scaffold protein in the commander complex that is essential for endosomal recycling of transmembrane cargos; the commander complex is composed of the CCC subcomplex and the retriever subcomplex. May modulate activity of cullin-RING E3 ubiquitin ligase (CRL) complexes. May down-regulate activation of NF-kappa-B. Modulates Na(+) transport in epithelial cells by regulation of apical cell surface expression of amiloride-sensitive sodium channel (ENaC) subunits. The chain is COMM domain-containing protein 3 (COMMD3) from Homo sapiens (Human).